We begin with the raw amino-acid sequence, 506 residues long: 2-isopropylmalate synthase (506 aa).

Residues 4-266 (ILFMDTTLRD…EPSMTLKEIK (263 aa)) enclose the Pyruvate carboxyltransferase domain. Mn(2+)-binding residues include aspartate 13, histidine 201, histidine 203, and asparagine 237. Residues 390 to 506 (NITQLQVHFV…KLKSFIQLVK (117 aa)) are regulatory domain.

It belongs to the alpha-IPM synthase/homocitrate synthase family. LeuA type 1 subfamily. In terms of assembly, homodimer. Mn(2+) serves as cofactor.

It localises to the cytoplasm. It carries out the reaction 3-methyl-2-oxobutanoate + acetyl-CoA + H2O = (2S)-2-isopropylmalate + CoA + H(+). It functions in the pathway amino-acid biosynthesis; L-leucine biosynthesis; L-leucine from 3-methyl-2-oxobutanoate: step 1/4. In terms of biological role, catalyzes the condensation of the acetyl group of acetyl-CoA with 3-methyl-2-oxobutanoate (2-ketoisovalerate) to form 3-carboxy-3-hydroxy-4-methylpentanoate (2-isopropylmalate). This Bacillus cereus (strain 03BB102) protein is 2-isopropylmalate synthase.